A 376-amino-acid polypeptide reads, in one-letter code: Chaperone protein DnaJ (376 aa).

Positions 5 to 72 (DFYEVLGVPK…QKRAAYDQYG (68 aa)) constitute a J domain. The CR-type zinc-finger motif lies at 136–214 (GKEAQIRIPS…CHGQGRVKKQ (79 aa)). Zn(2+) contacts are provided by cysteine 149, cysteine 152, cysteine 166, cysteine 169, cysteine 188, cysteine 191, cysteine 202, and cysteine 205. CXXCXGXG motif repeat units lie at residues 149-156 (CETCHGSG), 166-173 (CGTCQGSG), 188-195 (CPHCRGTG), and 202-209 (CTACHGQG). Disordered regions lie at residues 227–246 (DGMR…GGPP) and 354–376 (KKGG…SFFS). Positions 237 to 246 (GEPGTNGGPP) are enriched in gly residues. The segment covering 367–376 (WTDRLKSFFS) has biased composition (basic and acidic residues).

This sequence belongs to the DnaJ family. Homodimer. The cofactor is Zn(2+).

Its subcellular location is the cytoplasm. In terms of biological role, participates actively in the response to hyperosmotic and heat shock by preventing the aggregation of stress-denatured proteins and by disaggregating proteins, also in an autonomous, DnaK-independent fashion. Unfolded proteins bind initially to DnaJ; upon interaction with the DnaJ-bound protein, DnaK hydrolyzes its bound ATP, resulting in the formation of a stable complex. GrpE releases ADP from DnaK; ATP binding to DnaK triggers the release of the substrate protein, thus completing the reaction cycle. Several rounds of ATP-dependent interactions between DnaJ, DnaK and GrpE are required for fully efficient folding. Also involved, together with DnaK and GrpE, in the DNA replication of plasmids through activation of initiation proteins. This Acidovorax ebreus (strain TPSY) (Diaphorobacter sp. (strain TPSY)) protein is Chaperone protein DnaJ.